The chain runs to 315 residues: 4-hydroxy-3-methylbut-2-enyl diphosphate reductase (315 aa).

Residue C12 participates in [4Fe-4S] cluster binding. Residues H40 and H74 each contribute to the (2E)-4-hydroxy-3-methylbut-2-enyl diphosphate site. Residues H40 and H74 each contribute to the dimethylallyl diphosphate site. H40 and H74 together coordinate isopentenyl diphosphate. C96 contacts [4Fe-4S] cluster. Residue H124 coordinates (2E)-4-hydroxy-3-methylbut-2-enyl diphosphate. Position 124 (H124) interacts with dimethylallyl diphosphate. An isopentenyl diphosphate-binding site is contributed by H124. E126 acts as the Proton donor in catalysis. Position 167 (T167) interacts with (2E)-4-hydroxy-3-methylbut-2-enyl diphosphate. Residue C213 participates in [4Fe-4S] cluster binding. Residues S241, S242, N243, and S290 each coordinate (2E)-4-hydroxy-3-methylbut-2-enyl diphosphate. S241, S242, N243, and S290 together coordinate dimethylallyl diphosphate. Isopentenyl diphosphate is bound by residues S241, S242, N243, and S290.

Belongs to the IspH family. [4Fe-4S] cluster is required as a cofactor.

It catalyses the reaction isopentenyl diphosphate + 2 oxidized [2Fe-2S]-[ferredoxin] + H2O = (2E)-4-hydroxy-3-methylbut-2-enyl diphosphate + 2 reduced [2Fe-2S]-[ferredoxin] + 2 H(+). It carries out the reaction dimethylallyl diphosphate + 2 oxidized [2Fe-2S]-[ferredoxin] + H2O = (2E)-4-hydroxy-3-methylbut-2-enyl diphosphate + 2 reduced [2Fe-2S]-[ferredoxin] + 2 H(+). It functions in the pathway isoprenoid biosynthesis; dimethylallyl diphosphate biosynthesis; dimethylallyl diphosphate from (2E)-4-hydroxy-3-methylbutenyl diphosphate: step 1/1. It participates in isoprenoid biosynthesis; isopentenyl diphosphate biosynthesis via DXP pathway; isopentenyl diphosphate from 1-deoxy-D-xylulose 5-phosphate: step 6/6. In terms of biological role, catalyzes the conversion of 1-hydroxy-2-methyl-2-(E)-butenyl 4-diphosphate (HMBPP) into a mixture of isopentenyl diphosphate (IPP) and dimethylallyl diphosphate (DMAPP). Acts in the terminal step of the DOXP/MEP pathway for isoprenoid precursor biosynthesis. The polypeptide is 4-hydroxy-3-methylbut-2-enyl diphosphate reductase (Chloroherpeton thalassium (strain ATCC 35110 / GB-78)).